Here is a 257-residue protein sequence, read N- to C-terminus: MTSNPLDESMESLTVVPPAASPASRILVVEDEAVIRDMVALVLQQEGFTVDVAADGRTALNYFRSDSPEAGSVTENPDLVVLDLMLPAVNGLDFCRLLRRQGVTVPILMLSAKDTETDRVVGLEIGADDYLTKPFGTRELVARCRALLRRSQNQPAETPAVLRYEGLKLFPEECRVLLDDRELTLSPKEFRLLELFMRHPRRVWSRDQLLEKIWGIDFMGDSKTIDVHIRWLREKIEANPSNPSYLLTVRGFGYRLG.

The region spanning 25 to 148 (RILVVEDEAV…ELVARCRALL (124 aa)) is the Response regulatory domain. The residue at position 83 (aspartate 83) is a 4-aspartylphosphate. Residues 159-257 (PAVLRYEGLK…TVRGFGYRLG (99 aa)) constitute a DNA-binding region (ompR/PhoB-type).

In terms of processing, phosphorylated by SphS.

Member of the two-component regulatory system SphR/SphS. Response regulator. Involved in inducible production of alkaline phosphatase in response to phosphate limitation as it is directly involved in the regulation of phoA transcription in response to phosphate limitation. Binds to two distinct sites upstream from the phoA promoter. The chain is Alkaline phosphatase synthesis transcriptional regulatory protein SphR (sphR) from Synechococcus elongatus (strain ATCC 33912 / PCC 7942 / FACHB-805) (Anacystis nidulans R2).